The chain runs to 229 residues: Methyltransferase ctvB (229 aa).

This sequence belongs to the methyltransferase superfamily.

It participates in mycotoxin biosynthesis. Its function is as follows. Methyltransferase; part of the gene cluster that mediates the biosynthesis of citreoviridin, an inhibitor of the of F1-ATPase beta-subunit. The HR-PKS ctvA accepts acetyl-CoA as the starter unit and catalyzes eight iterations of malonyl-CoA extension and four iterations of SAM-dependent methylation at C4, C12, C14, and C16. The KR and DH domains selectively act on the first six iterations to generate the hexaene chain. In the last three iterations, the KR and DH domains terminate their functions to yield a beta,delta-diketo ester moiety, which then undergoes intramolecular cyclization to yield an alpha-pyrone intermediate. Subsequently, ctvB methylates the alpha-pyrone hydroxyl group to generate citreomontanin. In order to form the tetrahydrofuran ring with the correct stereochemistry, the terminal alkenes of citreomontanin need to undergo isomerization to yield a (17Z)-hexaene, a step that could be catalyzed by ctvC. The (17Z)-hexaene then undergoes bisepoxidation by ctvC to form a (17R,16R,15S,14R)-bisepoxide moiety. Lastly, ctvD acts as a regioselective hydrolase to form the tetrahydrofuran ring with the substituents in the correct absolute configuration, completing the biosynthesis of citreoviridin. The protein is Methyltransferase ctvB of Aspergillus terreus (strain NIH 2624 / FGSC A1156).